Reading from the N-terminus, the 276-residue chain is Large ribosomal subunit protein uL2 (276 aa).

Disordered regions lie at residues 34–55 and 221–276; these read LQPL…RHQG and RGSV…RRTK. The segment covering 37–48 has biased composition (polar residues); the sequence is LKNNAGRNNNGR.

This sequence belongs to the universal ribosomal protein uL2 family. Part of the 50S ribosomal subunit. Forms a bridge to the 30S subunit in the 70S ribosome.

Its function is as follows. One of the primary rRNA binding proteins. Required for association of the 30S and 50S subunits to form the 70S ribosome, for tRNA binding and peptide bond formation. It has been suggested to have peptidyltransferase activity; this is somewhat controversial. Makes several contacts with the 16S rRNA in the 70S ribosome. This is Large ribosomal subunit protein uL2 from Enterococcus faecalis (strain ATCC 700802 / V583).